The sequence spans 521 residues: Occludin (521 aa).

Positions 1–20 are disordered; sequence MSVRPFESPPPYRPDEFKPN. At 1 to 66 the chain is on the cytoplasmic side; sequence MSVRPFESPP…KWTSPPGVIR (66 aa). Positions 60–267 constitute an MARVEL domain; the sequence is SPPGVIRILS…IIFFAVKTRR (208 aa). Residues 67-89 form a helical membrane-spanning segment; sequence ILSMLIIVMCIAIFACVASTLAW. At 90-133 the chain is on the extracellular side; that stretch reads DRGYGTGLFGGSLNYPYSGFGYGGGYGGGYGGYGYGYGGYTDPR. Residues 134 to 158 traverse the membrane as a helical segment; that stretch reads AAKGFLLAMAAFCFIASLVIFVTSV. At 159–168 the chain is on the cytoplasmic side; it reads IRSGMSRTRR. A helical membrane pass occupies residues 169–193; the sequence is YYLIVIIVSAILGIMVFIATIVYIM. The Extracellular portion of the chain corresponds to 194–241; the sequence is GVNPTAQASGSMYGSQIYMICNQFYTPGGTGLYVDQYLYHYCVVDPQE. A disulfide bond links cysteine 214 and cysteine 235. The chain crosses the membrane as a helical span at residues 242 to 263; the sequence is AIAIVLGFMIIVAFALIIFFAV. The Cytoplasmic portion of the chain corresponds to 264–521; that stretch reads KTRRKMDRYD…MVGDYDRRKP (258 aa). Residue serine 300 is modified to Phosphoserine. The segment at 300 to 329 is disordered; the sequence is SAGTQDMPPPPSDYAERVDSPMAYSSNGKV. Threonine 303 carries the post-translational modification Phosphothreonine. Phosphoserine occurs at positions 311 and 319. Phosphoserine; by PKC; in vitro is present on serine 338. Serine 358 is subject to Phosphoserine. The segment at 361–405 is disordered; the sequence is DFRQPRYSSNGNLETPSKRAPTKGKAGKGKRTDPDHYETDYTTGG. Positions 366 to 375 are enriched in polar residues; that stretch reads RYSSNGNLET. Residue tyrosine 367 is modified to Phosphotyrosine. 2 positions are modified to phosphoserine: serine 368 and serine 369. A compositionally biased stretch (basic residues) spans 380 to 389; that stretch reads APTKGKAGKG. Basic and acidic residues predominate over residues 390 to 399; it reads KRTDPDHYET. Phosphotyrosine is present on residues tyrosine 397 and tyrosine 401. Phosphothreonine; by PKC/PRKCH is present on threonine 402. Threonine 403 bears the Phosphothreonine mark. Residue serine 407 is modified to Phosphoserine. In terms of domain architecture, OCEL spans 413 to 521; it reads EDWVREYPPI…MVGDYDRRKP (109 aa). Positions 424–488 form a coiled coil; the sequence is SDQQRQLYKR…EYNRLKQVKG (65 aa). Serine 489 bears the Phosphoserine mark.

The protein belongs to the ELL/occludin family. As to quaternary structure, interacts with TJP1/ZO1. Interacts with VAPA. Interacts with CLDN1, CLDN6, CLDN9, CLDN11, CLDN12 and CLDN17. Interacts with PLSCR1. Interacts with LSR, ILDR1 and ILDR2. Interacts with TJP2/ZO2. Post-translationally, dephosphorylated by PTPRJ. May be phosphorylated by PKC during translocation to cell-cell contacts. Localized at tight junctions of both epithelial and endothelial cells. Highly expressed in the testis, kidney, lung, liver and brain. Not detected in skeletal muscle, spleen and heart.

The protein resides in the cell membrane. Its subcellular location is the cell junction. It localises to the tight junction. Functionally, may play a role in the formation and regulation of the tight junction (TJ) paracellular permeability barrier. This Mus musculus (Mouse) protein is Occludin (Ocln).